Here is a 130-residue protein sequence, read N- to C-terminus: Ribonuclease P protein component 2 (130 aa).

It belongs to the eukaryotic/archaeal RNase P protein component 2 family. Consists of a catalytic RNA component and at least 5 protein subunits.

The protein localises to the cytoplasm. It carries out the reaction Endonucleolytic cleavage of RNA, removing 5'-extranucleotides from tRNA precursor.. Part of ribonuclease P, a protein complex that generates mature tRNA molecules by cleaving their 5'-ends. The chain is Ribonuclease P protein component 2 from Methanococcus maripaludis (strain DSM 14266 / JCM 13030 / NBRC 101832 / S2 / LL).